The chain runs to 116 residues: Alpha-defensin 29 (116 aa).

Positions 1 to 19 (MKTLVLLSALVLPCFQVQA) are cleaved as a signal peptide. The propeptide occupies 20–60 (DPIQNTDEETKTEEQPEEEDQAVSVSFGGTEGSALQDVAQR). Residues 22–44 (IQNTDEETKTEEQPEEEDQAVSV) form a disordered region. A run of 9 repeats spans residues 65–67 (CRK), 68–70 (CRV), 71–73 (CQK), 74–76 (CQV), 77–79 (CQK), 80–82 (CPV), 83–85 (CPT), 86–88 (CPQ), and 89–91 (CPK). The tract at residues 65-70 (CRKCRV) is 2 X 3 AA tandem repeats of C-R-X. The interval 71–79 (CQKCQVCQK) is 3 X 3 AA tandem repeats of C-Q-X. The segment at 80 to 91 (CPVCPTCPQCPK) is 4 X 3 AA tandem repeats of C-P-X.

It belongs to the alpha-defensin family. As to expression, small bowel.

Its subcellular location is the secreted. Its function is as follows. Apparent precursor of a secreted, cationic, proline- and cysteine-rich peptide that contains Cys-Pro-Xaa repeats. Unlike cryptdin, the proposed mature peptide region lacks the structural motif characteristic of defensins. The polypeptide is Alpha-defensin 29 (Mus musculus (Mouse)).